We begin with the raw amino-acid sequence, 287 residues long: ATP synthase gamma chain (287 aa).

Belongs to the ATPase gamma chain family. F-type ATPases have 2 components, CF(1) - the catalytic core - and CF(0) - the membrane proton channel. CF(1) has five subunits: alpha(3), beta(3), gamma(1), delta(1), epsilon(1). CF(0) has three main subunits: a, b and c.

Its subcellular location is the cell membrane. In terms of biological role, produces ATP from ADP in the presence of a proton gradient across the membrane. The gamma chain is believed to be important in regulating ATPase activity and the flow of protons through the CF(0) complex. This is ATP synthase gamma chain from Bacillus caldotenax.